The sequence spans 264 residues: Thymidylate synthase (264 aa).

Arg21 is a binding site for dUMP. A (6R)-5,10-methylene-5,6,7,8-tetrahydrofolate-binding site is contributed by His51. 126 to 127 (RR) is a binding site for dUMP. The active-site Nucleophile is the Cys146. DUMP is bound by residues 166-169 (RSCD), Asn177, and 207-209 (HLY). Asp169 is a (6R)-5,10-methylene-5,6,7,8-tetrahydrofolate binding site. Ala263 is a binding site for (6R)-5,10-methylene-5,6,7,8-tetrahydrofolate.

This sequence belongs to the thymidylate synthase family. Bacterial-type ThyA subfamily. In terms of assembly, homodimer.

It is found in the cytoplasm. It catalyses the reaction dUMP + (6R)-5,10-methylene-5,6,7,8-tetrahydrofolate = 7,8-dihydrofolate + dTMP. Its pathway is pyrimidine metabolism; dTTP biosynthesis. Its function is as follows. Catalyzes the reductive methylation of 2'-deoxyuridine-5'-monophosphate (dUMP) to 2'-deoxythymidine-5'-monophosphate (dTMP) while utilizing 5,10-methylenetetrahydrofolate (mTHF) as the methyl donor and reductant in the reaction, yielding dihydrofolate (DHF) as a by-product. This enzymatic reaction provides an intracellular de novo source of dTMP, an essential precursor for DNA biosynthesis. This chain is Thymidylate synthase, found in Sodalis glossinidius (strain morsitans).